The chain runs to 108 residues: Thioredoxin (108 aa).

In terms of domain architecture, Thioredoxin spans 2–108 (SDAILYVSDD…QLTAFLDSQL (107 aa)). Cysteines 33 and 36 form a disulfide.

The protein belongs to the thioredoxin family.

In terms of biological role, component of the thioredoxin-thioredoxin reductase system. Participates in various redox reactions through the reversible oxidation of its active center dithiol to a disulfide and catalyzes dithiol-disulfide exchange reactions. This Acidithiobacillus ferridurans protein is Thioredoxin (trxA).